A 307-amino-acid chain; its full sequence is Heparan sulfate glucosamine 3-O-sulfotransferase 1 (307 aa).

A signal peptide spans 1–20; the sequence is MAALLLGAVLLVAQPQLVPS. An N-linked (GlcNAc...) asparagine glycan is attached at Asn-48. 3'-phosphoadenylyl sulfate is bound by residues 64 to 68, Arg-147, and Ser-155; that span reads KGGTR. Asn-192, Asn-242, and Asn-249 each carry an N-linked (GlcNAc...) asparagine glycan. Tyr-255 is a 3'-phosphoadenylyl sulfate binding site. Cys-256 and Cys-265 are oxidised to a cystine. 270–274 provides a ligand contact to 3'-phosphoadenylyl sulfate; sequence KGRAH.

This sequence belongs to the sulfotransferase 1 family. In terms of tissue distribution, highly expressed in the brain and kidney and weakly expressed in the heart, lung and placenta.

It localises to the golgi apparatus lumen. It carries out the reaction alpha-D-glucosaminyl-[heparan sulfate](n) + 3'-phosphoadenylyl sulfate = 3-sulfo-alpha-D-glucosaminyl-[heparan sulfate](n) + adenosine 3',5'-bisphosphate + H(+). Functionally, sulfotransferase that utilizes 3'-phospho-5'-adenylyl sulfate (PAPS) to catalyze the transfer of a sulfo group to position 3 of glucosamine residues in heparan. Catalyzes the rate limiting step in the biosynthesis of heparan sulfate (HSact). This modification is a crucial step in the biosynthesis of anticoagulant heparan sulfate as it completes the structure of the antithrombin pentasaccharide binding site. This is Heparan sulfate glucosamine 3-O-sulfotransferase 1 (HS3ST1) from Homo sapiens (Human).